Reading from the N-terminus, the 305-residue chain is Dihydroorotate dehydrogenase B (NAD(+)), catalytic subunit (305 aa).

Residues S21 and 45-46 (KG) each bind FMN. Substrate-binding positions include K45 and 69–73 (NAVGL). FMN contacts are provided by N99 and N127. N127 serves as a coordination point for substrate. C130 serves as the catalytic Nucleophile. FMN contacts are provided by K165 and I191. A substrate-binding site is contributed by 192-193 (NT). FMN contacts are provided by residues G217, 243–244 (GG), and 265–266 (GT).

It belongs to the dihydroorotate dehydrogenase family. Type 1 subfamily. In terms of assembly, heterotetramer of 2 PyrK and 2 PyrD type B subunits. Requires FMN as cofactor.

The protein localises to the cytoplasm. It carries out the reaction (S)-dihydroorotate + NAD(+) = orotate + NADH + H(+). It functions in the pathway pyrimidine metabolism; UMP biosynthesis via de novo pathway; orotate from (S)-dihydroorotate (NAD(+) route): step 1/1. Functionally, catalyzes the conversion of dihydroorotate to orotate with NAD(+) as electron acceptor. In Parabacteroides distasonis (strain ATCC 8503 / DSM 20701 / CIP 104284 / JCM 5825 / NCTC 11152), this protein is Dihydroorotate dehydrogenase B (NAD(+)), catalytic subunit (pyrD).